We begin with the raw amino-acid sequence, 130 residues long: UPF0102 protein Cthe_0758 (130 aa).

It belongs to the UPF0102 family.

The polypeptide is UPF0102 protein Cthe_0758 (Acetivibrio thermocellus (strain ATCC 27405 / DSM 1237 / JCM 9322 / NBRC 103400 / NCIMB 10682 / NRRL B-4536 / VPI 7372) (Clostridium thermocellum)).